Reading from the N-terminus, the 469-residue chain is MKIKTRFAPSPTGYLHVGGARTALYSWLFARNHGGEFVLRIEDTDLERSTQQAIDAIMDGMNWLNLDWDEGPYYQTKRFDRYNTVIDQMLEAGSAYKCYCSKERLETLRENQMANGEKPRYDGRCRDGHEHHAENEPCVVRFRNPQEGSVIFDDQIRGPIEFSNQELDDLIIRRTDGAPTYNFCVVIDDWDMEITHVIRGEDHINNTPRQINILKAIGAQVPVYAHVSMILGDDGKKLSKRHGAVGVMQYRDDGYLPEALLNYLVRLGWSHGDQEIFSIDEMKKLFELDVVSKSASAFNTEKLQWLNHHYINSLAPEYVATHLQWHIEQENIDTRTGPQLAQLVKLLGERCKTLKEMAASCRYFYEEFDEFDADAAKKHLRPVARQPLEVVRDKLAAMSDWTAEGVHQAIQAAADELEVGMGKVGMPLRVAVTGAGQSPALDVTVHAIGQARSVARIEKALAYIATREA.

The 'HIGH' region signature appears at Pro-9–Gly-19. Residues Cys-98, Cys-100, Cys-125, and Asp-127 each coordinate Zn(2+). Positions Lys-237–Arg-241 match the 'KMSKS' region motif. ATP is bound at residue Lys-240.

This sequence belongs to the class-I aminoacyl-tRNA synthetase family. Glutamate--tRNA ligase type 1 subfamily. In terms of assembly, monomer. Requires Zn(2+) as cofactor.

Its subcellular location is the cytoplasm. It catalyses the reaction tRNA(Glu) + L-glutamate + ATP = L-glutamyl-tRNA(Glu) + AMP + diphosphate. Its function is as follows. Catalyzes the attachment of glutamate to tRNA(Glu) in a two-step reaction: glutamate is first activated by ATP to form Glu-AMP and then transferred to the acceptor end of tRNA(Glu). The polypeptide is Glutamate--tRNA ligase (Erwinia tasmaniensis (strain DSM 17950 / CFBP 7177 / CIP 109463 / NCPPB 4357 / Et1/99)).